Reading from the N-terminus, the 1959-residue chain is Sodium channel protein type 10 subunit alpha (1959 aa).

Residues 1–125 (MEFPIGSVGT…FNLIRRTAIK (125 aa)) lie on the Cytoplasmic side of the membrane. The segment at 30–53 (AHGAAKKARAKHGERKGQDEKPRP) is disordered. The span at 33–43 (AAKKARAKHGE) shows a compositional bias: basic residues. Basic and acidic residues predominate over residues 44–53 (RKGQDEKPRP). The I repeat unit spans residues 116–404 (FNLIRRTAIK…VTMAYEEQNQ (289 aa)). Residues 126 to 149 (VSVHAWFSIFITITILFNCVCMTQ) form a helical membrane-spanning segment. At 150–154 (NDLPE) the chain is on the extracellular side. Residues 155 to 174 (KIEYAFTVIYTFEALIKILA) traverse the membrane as a helical segment. Topologically, residues 175–187 (RGFCLNEFTYLRD) are cytoplasmic. Residues 188-206 (PWNWLDFSVITLAYVGAAI) traverse the membrane as a helical segment. Over 207 to 212 (DLRGIS) the chain is Extracellular. The helical; Voltage-sensor transmembrane segment at 213 to 232 (GLRTFRVLRALKTVSVIPGL) threads the bilayer. At 233-248 (KVIVGALIHSVRKLAD) the chain is on the cytoplasmic side. A helical membrane pass occupies residues 249–272 (VTILTVFCLSVFALVGLQLFKGNL). The Extracellular segment spans residues 273–340 (KNKCIKRSTD…PDFNYTSFDS (68 aa)). A disulfide bridge links Cys-276 with Cys-318. N-linked (GlcNAc...) asparagine glycans are attached at residues Asn-288, Asn-311, and Asn-334. Positions 341–365 (FAWAFLSLFRLMTQDSWERLYQQTL) form an intramembrane region, pore-forming. Residues 366 to 372 (RASGKMY) are Extracellular-facing. Residues 373–398 (MVFFVLVIFLGSFYLVNLILAVVTMA) traverse the membrane as a helical segment. Residues 399 to 659 (YEEQNQATIA…KWMKFKMVLF (261 aa)) lie on the Cytoplasmic side of the membrane. Ser-440, Ser-443, Ser-466, and Ser-478 each carry phosphoserine. Disordered stretches follow at residues 442-484 (HSHN…YNQR) and 510-578 (SQDV…ELTT). The segment covering 475-484 (SPQSDPYNQR) has biased composition (polar residues). Residues 523-533 (GVFHGDHESHR) show a composition bias toward basic and acidic residues. A phosphoserine mark is found at Ser-612 and Ser-615. An II repeat occupies 647 to 911 (CCPKWMKFKM…EDDGEVNNLQ (265 aa)). The chain crosses the membrane as a helical span at residues 660-684 (ELVTDPFAELTITLCIVVNTIFMAM). At 685–695 (EHYPMTDAFDA) the chain is on the extracellular side. The helical transmembrane segment at 696 to 719 (MLQAGNIVFTVFFTMEMAFKIIAF) threads the bilayer. Residues 720 to 727 (DPYYYFQK) lie on the Cytoplasmic side of the membrane. Residues 728-747 (KWNVFDCVIVTVSLLELSIA) form a helical membrane-spanning segment. At 748–753 (KKGSLS) the chain is on the extracellular side. A helical; Voltage-sensor membrane pass occupies residues 754–773 (VLRTFRLLRVFKLAKSWPTL). Topologically, residues 774–789 (NTLIKIIGNSVGALGN) are cytoplasmic. Residues 790-810 (LTFILAIIVFIFALVGKQLLG) traverse the membrane as a helical segment. The Extracellular portion of the chain corresponds to 811-834 (EDYGCRKDGTALWNEGQLRWHMCD). The pore-forming intramembrane region spans 835-855 (FFHSFLVIFRILCGEWIENMW). Residues 856–864 (VCMQVSEKS) lie on the Extracellular side of the membrane. The cysteines at positions 857 and 866 are disulfide-linked. Residues 865-890 (ICLILFLTVMVLGNLVVLNLFIALLL) traverse the membrane as a helical segment. The Cytoplasmic segment spans residues 891–1149 (NSFSADNLTA…GWQVRKTCYR (259 aa)). Over residues 1004–1016 (GESDLDELEEDIE) the composition is skewed to acidic residues. Disordered stretches follow at residues 1004-1034 (GESD…QQDQ) and 1071-1097 (ATPQ…PDPE). Residues 1142–1451 (QVRKTCYRIV…KKYYNAMKKL (310 aa)) form an III repeat. A helical transmembrane segment spans residues 1150-1173 (IVEHSWFESFIIFMILLSSGALAF). Topologically, residues 1174 to 1186 (EDNYLEQKPRVKS) are extracellular. The helical transmembrane segment at 1187–1212 (MLEYTDRVFTFIFVFEMLLKWVAYGF) threads the bilayer. At 1213-1218 (KKYFTN) the chain is on the cytoplasmic side. Residues 1219-1240 (AWCWLDFLIVNISLTSLIAKIL) form a helical membrane-spanning segment. Residues 1241 to 1244 (DYSD) are Extracellular-facing. A helical; Voltage-sensor membrane pass occupies residues 1245–1266 (VASLKALRTLRALRPLRALSRF). Residues 1267 to 1285 (EGMRVVVDALVGAIPSIMN) are Cytoplasmic-facing. Residues 1286–1313 (VLLVCLIFWLIFSIMGVNLFAGKFSRCI) form a helical membrane-spanning segment. Over 1314-1355 (DTSNNPFSVVNSTIVNNKSECRNQNHTGHFFWVNVKVNFDNV) the chain is Extracellular. Positions 1356–1377 (AMGYLALLQVATFKGWMDIMYA) form an intramembrane region, pore-forming. Topologically, residues 1378–1393 (AVDSREINSQPQWEDN) are extracellular. The helical transmembrane segment at 1394 to 1420 (LYMYLYFVVFIIFGGFFTLNLFVGVII) threads the bilayer. Over 1421–1473 (DNFNQQKKKLGGQDIFMTEEQKKYYNAMKKLGSKKPQKPIPRPLNKYQGFVFD) the chain is Cytoplasmic. Ser-1453 carries the phosphoserine; by PKC modification. The IV repeat unit spans residues 1460 to 1759 (IPRPLNKYQG…WEKFDPEATQ (300 aa)). A helical membrane pass occupies residues 1474–1497 (IVTRQAFDIIIMVLICLNMITMMV). The Extracellular portion of the chain corresponds to 1498-1508 (ETDGQSEEKTK). The helical transmembrane segment at 1509–1532 (ILGRINQFFVAVFTGECVMKMFAL) threads the bilayer. Residues 1533–1538 (RQYYFT) are Cytoplasmic-facing. A helical transmembrane segment spans residues 1539 to 1562 (NGWNVFDFIVVILSIGSLVFSAIL). Residues 1563–1574 (KSLESYFSPTLF) are Extracellular-facing. The helical; Voltage-sensor transmembrane segment at 1575 to 1596 (RVIRLARIGRILRLIRAAKGIR) threads the bilayer. At 1597–1611 (TLLFALMMSLPALFN) the chain is on the cytoplasmic side. A helical membrane pass occupies residues 1612–1634 (IGLLLFLVMFIYSIFGMASFANV). The Extracellular portion of the chain corresponds to 1635-1648 (VEEAGIDDMFNFQT). Residues 1649 to 1671 (FGNSMLCLFQITTSAGWDGLLSP) constitute an intramembrane region (pore-forming). The Extracellular portion of the chain corresponds to 1672–1699 (ILNTGPPYCDPNLSNNNTSKGNCGSPTV). The chain crosses the membrane as a helical span at residues 1700 to 1724 (GIVFFTTYIIISFLIVVNMYIAVIL). Residues 1725–1959 (ENFNVATEES…SKEGDSPGPQ (235 aa)) are Cytoplasmic-facing. One can recognise an IQ domain in the interval 1853-1882 (EDISATVIQKAYRSYVLQRSLTLSNPLRVP). The disordered stretch occupies residues 1901 to 1959 (ANDSGRLPDKSETTSATSFPPSYDSVTRGLSDRVNISTSNSMHNEDEVTSKEGDSPGPQ). Positions 1943–1959 (HNEDEVTSKEGDSPGPQ) are enriched in basic and acidic residues.

The protein belongs to the sodium channel (TC 1.A.1.10) family. Nav1.8/SCN10A subfamily. As to quaternary structure, the channel consists of an ion conducting pore forming alpha-subunit regulated by one or more associated auxiliary subunits SCN1B, SCN2B and SCN3B; electrophysiological properties may vary depending on the type of the associated beta subunits. Found in a number of complexes with PRX, DYNLT1 and PDZD2. Interacts with proteins such as FSTL1, PRX, DYNLT1, PDZD2, S100A10 and many others. Interacts with NEDD4 and NEDD4L. In terms of processing, ubiquitinated by NEDD4L; which promotes its endocytosis. Phosphorylation at Ser-1453 by PKC in a highly conserved cytoplasmic loop slows inactivation of the sodium channel and reduces peak sodium currents. Post-translationally, lacks the cysteine which covalently binds the conotoxin GVIIJ. This cysteine (position 816) is speculated in other sodium channel subunits alpha to be implied in covalent binding with the sodium channel subunit beta-2 or beta-4.

Its subcellular location is the cell membrane. The catalysed reaction is Na(+)(in) = Na(+)(out). Tetrodotoxin-resistant channel that mediates the voltage-dependent sodium ion permeability of excitable membranes. Assuming opened or closed conformations in response to the voltage difference across the membrane, the protein forms a sodium-selective channel through which sodium ions may pass in accordance with their electrochemical gradient. Plays a role in neuropathic pain mechanisms. This chain is Sodium channel protein type 10 subunit alpha (Scn10a), found in Onychomys torridus (Southern grasshopper mouse).